A 357-amino-acid chain; its full sequence is Glucose-6-phosphatase catalytic subunit 1 (357 aa).

At 1–28 (MEKGMNVLHDFGIQSTHYLQVNYQDSQD) the chain is on the lumenal side. A helical membrane pass occupies residues 29 to 49 (WFILVSVIADLRNAFYVLFPI). Residues 50–60 (WFHLREAVGIK) lie on the Cytoplasmic side of the membrane. The chain crosses the membrane as a helical span at residues 61–81 (LLWVAVIGDWLNLVFKWILFG). The Lumenal portion of the chain corresponds to 82 to 117 (QRPYWWVMDTDYYSNASVPLIKQFPVTCETGPGSPS). A substrate-binding site is contributed by R83. N96 carries an N-linked (GlcNAc...) asparagine glycan. Residues 118-138 (GHAMGTAGVYYVMVTSTLSMF) form a helical membrane-spanning segment. The active-site Proton donor is the H119. Over 139-147 (RGKKKPTYR) the chain is Cytoplasmic. Residues 148-168 (FRCLNVILWLGFWAVQLNVCL) form a helical membrane-spanning segment. The Lumenal portion of the chain corresponds to 169–170 (SR). R170 contacts substrate. The helical transmembrane segment at 171 to 191 (IYLAAHFPHQVVAGVLSGIAV) threads the bilayer. H176 acts as the Nucleophile in catalysis. Residues 192 to 209 (AETFRHIQSIYNASLKKY) are Cytoplasmic-facing. Residues 210–230 (FFITFFLLSFAIGFYLLLKGL) form a helical membrane-spanning segment. The Lumenal segment spans residues 231-254 (GVDLLWTLEKARRWCERPEWVHID). Residues 255–275 (TTPFASLLKNVGTLFGLGLAL) form a helical membrane-spanning segment. Residues 276 to 291 (NSSMYRESCKGTLSKW) are Cytoplasmic-facing. A helical transmembrane segment spans residues 292–312 (FPFRLSCIVVSLILLHLFDSL). Residues 313–320 (KPPSQIEL) are Lumenal-facing. Residues 321-341 (IFYVLSFCKSAAVPLASVSLI) traverse the membrane as a helical segment. Residues 342 to 357 (PYCLARVLGQPDKKSL) are Cytoplasmic-facing. Residues 354-357 (KKSL) carry the Prevents secretion from ER motif.

It belongs to the glucose-6-phosphatase family.

Its subcellular location is the endoplasmic reticulum membrane. It carries out the reaction D-glucose 6-phosphate + H2O = D-glucose + phosphate. It functions in the pathway carbohydrate biosynthesis; gluconeogenesis. Hydrolyzes glucose-6-phosphate to glucose in the endoplasmic reticulum. Forms with the glucose-6-phosphate transporter (SLC37A4/G6PT) the complex responsible for glucose production in the terminal step of glycogenolysis and gluconeogenesis. Hence, it is the key enzyme in homeostatic regulation of blood glucose levels. This Felis catus (Cat) protein is Glucose-6-phosphatase catalytic subunit 1 (G6PC1).